The chain runs to 270 residues: Ribosomal RNA small subunit methyltransferase A (270 aa).

S-adenosyl-L-methionine is bound by residues histidine 11, leucine 13, glycine 38, glutamate 59, aspartate 84, and asparagine 109.

Belongs to the class I-like SAM-binding methyltransferase superfamily. rRNA adenine N(6)-methyltransferase family. RsmA subfamily.

The protein localises to the cytoplasm. It catalyses the reaction adenosine(1518)/adenosine(1519) in 16S rRNA + 4 S-adenosyl-L-methionine = N(6)-dimethyladenosine(1518)/N(6)-dimethyladenosine(1519) in 16S rRNA + 4 S-adenosyl-L-homocysteine + 4 H(+). Specifically dimethylates two adjacent adenosines (A1518 and A1519) in the loop of a conserved hairpin near the 3'-end of 16S rRNA in the 30S particle. May play a critical role in biogenesis of 30S subunits. The chain is Ribosomal RNA small subunit methyltransferase A from Crocosphaera subtropica (strain ATCC 51142 / BH68) (Cyanothece sp. (strain ATCC 51142)).